Consider the following 509-residue polypeptide: Cytochrome P450 4A10 (509 aa).

2 helical membrane passes run 11 to 31 (FTGS…LLLL) and 121 to 141 (LLAP…WFQH). Residue glutamate 320 coordinates heme. Serine 439 carries the post-translational modification Phosphoserine. Cysteine 456 contacts heme.

This sequence belongs to the cytochrome P450 family. Heme serves as cofactor. Expressed in liver (at protein level) and kidney (at protein level).

The protein resides in the endoplasmic reticulum membrane. It localises to the microsome membrane. The enzyme catalyses an omega-methyl-long-chain fatty acid + reduced [NADPH--hemoprotein reductase] + O2 = an omega-hydroxy-long-chain fatty acid + oxidized [NADPH--hemoprotein reductase] + H2O + H(+). The catalysed reaction is dodecanoate + reduced [NADPH--hemoprotein reductase] + O2 = 12-hydroxydodecanoate + oxidized [NADPH--hemoprotein reductase] + H2O + H(+). It carries out the reaction dodecanoate + reduced [NADPH--hemoprotein reductase] + O2 = 11-hydroxydodecanoate + oxidized [NADPH--hemoprotein reductase] + H2O + H(+). It catalyses the reaction tetradecanoate + reduced [NADPH--hemoprotein reductase] + O2 = 14-hydroxytetradecanoate + oxidized [NADPH--hemoprotein reductase] + H2O + H(+). The enzyme catalyses hexadecanoate + reduced [NADPH--hemoprotein reductase] + O2 = 16-hydroxyhexadecanoate + oxidized [NADPH--hemoprotein reductase] + H2O + H(+). The catalysed reaction is (9Z)-octadecenoate + reduced [NADPH--hemoprotein reductase] + O2 = 18-hydroxy-(9Z)-octadecenoate + oxidized [NADPH--hemoprotein reductase] + H2O + H(+). It carries out the reaction (9Z,12Z)-octadecadienoate + reduced [NADPH--hemoprotein reductase] + O2 = 18-hydroxy-(9Z,12Z)-octadecadienoate + oxidized [NADPH--hemoprotein reductase] + H2O + H(+). It catalyses the reaction (9Z,12Z)-octadecadienoate + reduced [NADPH--hemoprotein reductase] + O2 = 17-hydroxy-(9Z,12Z)-octadecadienoate + oxidized [NADPH--hemoprotein reductase] + H2O + H(+). The enzyme catalyses (5Z,8Z,11Z,14Z)-eicosatetraenoate + reduced [NADPH--hemoprotein reductase] + O2 = 20-hydroxy-(5Z,8Z,11Z,14Z)-eicosatetraenoate + oxidized [NADPH--hemoprotein reductase] + H2O + H(+). The catalysed reaction is 8,9-epoxy-(5Z,11Z,14Z)-eicosatrienoate + reduced [NADPH--hemoprotein reductase] + O2 = 20-hydroxy-8,9-epoxy-(5Z,11Z,14Z)-eicosatrienoate + oxidized [NADPH--hemoprotein reductase] + H2O + H(+). Functionally, a cytochrome P450 monooxygenase involved in the metabolism of fatty acids. Catalyzes predominantly the oxidation of the terminal carbon (omega-oxidation) of long-chain fatty acids. Acts as a major omega-hydroxylase for dodecanoic (lauric) acid in liver. In kidney, may play an important role in omega-hydroxylation of (5Z,8Z,11Z,14Z)-eicosatetraenoic acid (arachidonate) to 20-hydroxyeicosatetraenoic acid (20-HETE), a signaling molecule acting both as vasoconstrictive and natriuretic with overall effect on arterial blood pressure. Also participates in the formation of anti-inflammatory hydroxyepoxyeicosatrienoic acids (HEETs) in kidney by converting 8,9-epoxyeicosatrienoic acid (EET) to 20,8,9-HEET, an activator of PPARA. Displays substantially lower fatty acid omega-1 hydroxylase activity. Mechanistically, uses molecular oxygen inserting one oxygen atom into a substrate, and reducing the second into a water molecule, with two electrons provided by NADPH via cytochrome P450 reductase (CPR; NADPH-ferrihemoprotein reductase). This is Cytochrome P450 4A10 (Cyp4a10) from Rattus norvegicus (Rat).